A 1478-amino-acid chain; its full sequence is MVKLDIHTLAHHLKQERLYVNSEKQLIQRLNADVLKTAEKLYRTAWIAKQQRINLDRLIITSAEASPAECCQHAKILEDTQFVDGYKQLGFQETAYGEFLSRLRENPRLIASSLVAGEKLNQENTQSVIYTVFTSLYGNCIMQEDESYLLQVLRYLIEFELKESDNPRRLLRRGTCAFSILFKLFSEGLFSAKLFLTATLHEPIMQLLVEDEDHLETDPNKLIERFSPSQQEKLFGEKGSDRFRQKVQEMVESNEAKLVALVNKFIGYLKQNTYCFPHSLRWIVSQMYKTLSCVDRLEVGEVRAMCTDLLLACFICPAVVNPEQYGIISDAPINEVARFNLMQVGRLLQQLAMTGSEEGDPRTKSSLGKFDKSCVAAFLDVVIGGRAVETPPLSSVNLLEGLSRTVVYITYSQLITLVNFMKSVMSGDQLREDRMALDNLLANLPPAKPGKSSSLEMTPYNTPQLSPATTPANKKNRLPIATRSRSRTNMLMDLHMDHEGSSQETIQEVQPEEVLVISLGTGPQLTPGMMSENEVLNMQLSDGGQGDVPVDENKLHGKPDKTLRFSLCSDNLEGISEGPSNRSNSVSSLDLEGESVSELGAGPSGSNGVEALQLLEHEQATTQDNLDDKLRKFEIRDMMGLTDDRDISETVSETWSTDVLGSDFDPNIDEDRLQEIAGAAAENMLGSLLCLPGSGSVLLDPCTGSTISETTSEAWSVEVLPSDSEAPDLKQEERLQELESCSGLGSTSDDTDVREVSSRPSTPGLSVVSGISATSEDIPNKIEDLRSECSSDFGGKDSVTSPDMDEITHGAHQLTSPPSQSESLLAMFDPLSSHEGASAVVRPKVHYARPSHPPPDPPILEGAVGGNEARLPNFGSHVLTPAEMEAFKQRHSYPERLVRSRSSDIVSSVRRPMSDPSWNRRPGNEERELPPAAAIGATSLVAAPHSSSSSPSKDSSRGETEERKDSDDEKSDRNRPWWRKRFVSAMPKAPIPFRKKEKQEKDKDDLGPDRFSTLTDDPSPRLSAQAQVAEDILDKYRNAIKRTSPSDGAMANYESTGDNHDRDLSSKLLYHSDKEVMGDGESAHDSPRDEALQNISADDLPDSASQAAHPQDSAFSYRDAKKKLRLALCSADSVAFPVLTHSTRNGLPDHTDPEDNEIVCFLKVQIAEAINLQDKNLMAQLQETMRCVCRFDNRTCRKLLASIAEDYRKRAPYIAYLTRCRQGLQTTQAHLERLLQRVLRDKEVANRYFTTVCVRLLLESKEKKIREFIQDFQKLTAADDKTAQVEDFLQFLYGAMAQDVIWQNASEEQLQDAQLAIERSVMNRIFKLAFYPNQDGDILRDQVLHEHIQRLSKVVTANHRALQIPEVYLREAPWPSAQSEIRTISAYKTPRDKVQCILRMCSTIMNLLSLANEDSVPGADDFVPVLVFVLIKANPPCLLSTVQYISSFYASCLSGEESYWWMQFTAAVEFIKTIDDRK.

Residues Ser-147 to Gly-385 enclose the Ras-GAP domain. Position 227 is a phosphoserine (Ser-227). A phosphothreonine mark is found at Thr-390 and Thr-458. Tyr-460 bears the Phosphotyrosine mark. Ser-466 carries the phosphoserine modification. Thr-470 is modified (phosphothreonine). A phosphoserine mark is found at Ser-566 and Ser-569. Disordered regions lie at residues Gly-574–Gly-608, Glu-739–Gln-820, and His-846–Phe-874. Positions Gly-578–Ser-588 are enriched in polar residues. Phosphoserine occurs at positions 742, 746, and 757. Over residues Ser-758–Asp-777 the composition is skewed to polar residues. Thr-762 bears the Phosphothreonine mark. Phosphoserine is present on Ser-766. Residues Ile-778–Cys-789 show a composition bias toward basic and acidic residues. Ser-876, Ser-902, Ser-903, Ser-908, Ser-914, and Ser-966 each carry phosphoserine. The segment covering Gln-889–Ser-902 has biased composition (basic and acidic residues). Disordered regions lie at residues Gln-889 to Ser-1023 and Thr-1043 to Leu-1064. Basic and acidic residues-rich tracts occupy residues Asp-954–Arg-975 and Glu-997–Pro-1008. Residues Ser-1012–Ser-1023 show a composition bias toward polar residues. Phosphoserine is present on residues Ser-1019, Ser-1046, Ser-1096, and Ser-1103. The region spanning Ile-1338–Lys-1478 is the VPS9 domain.

The protein belongs to the GAPVD1 family. Interacts with TRIP10/CIP4. Interacts with RAB5A. As to quaternary structure, (Microbial infection) Interacts with P.falciparum (strain 3D7) CK1. In terms of tissue distribution, expressed in erythrocytes (at protein level).

Its subcellular location is the membrane. It localises to the endosome. Acts both as a GTPase-activating protein (GAP) and a guanine nucleotide exchange factor (GEF), and participates in various processes such as endocytosis, insulin receptor internalization or LC2A4/GLUT4 trafficking. Acts as a GEF for the Ras-related protein RAB31 by exchanging bound GDP for free GTP, leading to regulate LC2A4/GLUT4 trafficking. In the absence of insulin, it maintains RAB31 in an active state and promotes a futile cycle between LC2A4/GLUT4 storage vesicles and early endosomes, retaining LC2A4/GLUT4 inside the cells. Upon insulin stimulation, it is translocated to the plasma membrane, releasing LC2A4/GLUT4 from intracellular storage vesicles. Also involved in EGFR trafficking and degradation, possibly by promoting EGFR ubiquitination and subsequent degradation by the proteasome. Has GEF activity for Rab5 and GAP activity for Ras. This Homo sapiens (Human) protein is GTPase-activating protein and VPS9 domain-containing protein 1 (GAPVD1).